The following is a 767-amino-acid chain: MDPETLDDLVNELFDKKKQLTVSQKQQREKLQAYMMAQLEGSSSASDDDDEDDGEGEDDNDSNSDEDESGSESDATSADDSFSSDDNDDDDSGDEDGSDSGGSDSDLSFEDDSDYEDSHSTEDLTEYTINSENSSVEPTPPKRLKAGDKRPCSTQEEEESEDDNNNKPTARKLQMGESATNGRIQQRKSMVEPATTSKPASCPLTRKSLPANGSAAKSCPLPPKNQKQSAAAKSCPLPPKEKKLSSGAVAKSCPLPPKNEKPSSSGASCPLPSKTSKQVQPRVCQLSDKPKSSSSQSTQKRSKNEAAEGATDTNGRQEAHRQNSIEEGRRILSWVLNPIKPDDFFKDFWEKNACQVQRNAPTYFSELISFEMIDQMMLKHHLEFTTNIDVTSYKDGRRETLNPEGRAMPPTVWGFYGEGCSIRILNPSTYLPGLRTMCSLMQEFFHCLVGANVYLTPPNSQGFAPHFDDIEAFVLQVEGRKRWRLYMPLQPSDVLARESSGNYTPDQLGEPIFDEVLKPGDVLYFPRGTVHQAITEKKHHSLHITLSVYQQQAYANLLEKLMPMVLQSAIKHSVSLRRGLPLHTWQHLGIAHGATKCSSRSQLIKGIQEMVQQHLTPSENQIDAAVDQLAKRYQHEALPPTILPEEKLRTVFGSRSATDAHGKCLCDYELTEDTSIRLLRANILRLVVDETHLRVYYYVDNALEYCKYEANFMEIEPTEAAAVETLMHAYPAYVKISMLPLRKPERRIEVATALWERGLLMTETPFK.

The tract at residues 21–324 (TVSQKQQREK…GRQEAHRQNS (304 aa)) is disordered. Ser44 is subject to Phosphoserine. Residues 46–71 (SDDDDEDDGEGEDDNDSNSDEDESGS) show a composition bias toward acidic residues. Over residues 72 to 81 (ESDATSADDS) the composition is skewed to low complexity. Residues 82–98 (FSSDDNDDDDSGDEDGS) are compositionally biased toward acidic residues. 2 stretches are compositionally biased toward polar residues: residues 127–137 (YTINSENSSVE) and 177–199 (ESATNGRIQQRKSMVEPATTSKP). At Ser214 the chain carries Phosphoserine. Polar residues predominate over residues 262 to 279 (PSSSGASCPLPSKTSKQV). Positions 315 to 324 (GRQEAHRQNS) are enriched in basic and acidic residues. The JmjC domain occupies 420–565 (CSIRILNPST…NLLEKLMPMV (146 aa)). Fe cation contacts are provided by His466, Asp468, and His531.

This sequence belongs to the ROX family. NO66 subfamily. It depends on Fe(2+) as a cofactor.

It localises to the nucleus. It catalyses the reaction N(6),N(6)-dimethyl-L-lysyl(36)-[histone H3] + 2 2-oxoglutarate + 2 O2 = L-lysyl(36)-[histone H3] + 2 formaldehyde + 2 succinate + 2 CO2. Oxygenase that can act as both a histone lysine demethylase and a ribosomal histidine hydroxylase. Specifically demethylates 'Lys-4' (H3K4me) and 'Lys-36' (H3K36me) of histone H3, thereby playing a central role in histone code. The polypeptide is Bifunctional lysine-specific demethylase and histidyl-hydroxylase NO66 (Drosophila willistoni (Fruit fly)).